The following is a 101-amino-acid chain: Small ribosomal subunit protein uS14 (101 aa).

This sequence belongs to the universal ribosomal protein uS14 family. As to quaternary structure, part of the 30S ribosomal subunit. Contacts proteins S3 and S10.

In terms of biological role, binds 16S rRNA, required for the assembly of 30S particles and may also be responsible for determining the conformation of the 16S rRNA at the A site. This is Small ribosomal subunit protein uS14 from Histophilus somni (strain 2336) (Haemophilus somnus).